The chain runs to 828 residues: Vacuolar transporter chaperone complex subunit 2 (828 aa).

The SPX domain maps to 1–146; it reads MLFGVKLANE…PKYPSVKSLL (146 aa). The Cytoplasmic portion of the chain corresponds to 1–693; it reads MLFGVKLANE…EAKVWLANER (693 aa). The segment at 127–134 is important for inositol polyphosphate binding; sequence KIVKKHDK. Phosphoserine is present on residues serine 182, serine 187, serine 196, serine 264, serine 583, serine 615, and serine 616. Residues 580–636 are disordered; sequence RRLSNLKEPQHQAAVPVSQEENERITSQGDLEADGSSDEETEQEPHSKRSKKVRRRK. Residues 610–621 are compositionally biased toward acidic residues; that stretch reads LEADGSSDEETE. At threonine 620 the chain carries Phosphothreonine. At serine 626 the chain carries Phosphoserine. Residues 627–636 show a composition bias toward basic residues; sequence KRSKKVRRRK. Serine 657 is subject to Phosphoserine. The chain crosses the membrane as a helical span at residues 694–716; that stretch reads TFNRWLSVTSLLSVLTFSIYNSV. The Vacuolar portion of the chain corresponds to 717 to 727; the sequence is KKAEYPTLANY. A helical membrane pass occupies residues 728–748; sequence MAYVYFGLTIFCALWSYSIYM. Residues 749-766 are Cytoplasmic-facing; the sequence is KRVDIIQQRSGQHLDAPL. The chain crosses the membrane as a helical span at residues 767-787; it reads GPVLVSIVLFVTLVVNFVMAF. Topologically, residues 788-828 are vacuolar; sequence RNAAKSRQELQIQNLEVPERIPEVLRPLQNYLFKLMGPSSD.

It belongs to the VTC2/3 family. As to quaternary structure, the VTC core complex is an integral membrane heterooligomer composed of the catalytic subunit VTC4 and the accessory subunits VTC1, VTC2 and VTC3. The complex exists in 2 different sub-complexes: VTC1-VTC2-VCT4 and VCT1-VTC3-VTC4. The VCT1-VTC3-VTC4 subcomplex is mostly found on the vacuolar membrane. The VTC1-VTC2-VCT4 subcomplex is observed in the cell periphery, probably ER and nuclear envelope, but localizes to the vacuole under phosphate starvation. Each subunit contains 3 transmembrane helices. VTC1 is a small membrane protein without hydrophilic domain. VTC2, VTC3 and VTC4 are related and have 2 hydrophilic domains that face the cytosol, an N-terminal SPX domain and the central core domain. The central core in VTC4 is the catalytic domain, with the essential catalytic lysine replaced by isoleucine and leucine in VTC2 and VTC3, respectively. The core complex associates with the accessory subunit VTC5. The complex interacts with the v-SNARE NYV1 and with the V(0) subunit of V-ATPase VPH1.

The protein resides in the vacuole membrane. Its subcellular location is the cytoplasm. It localises to the cell cortex. It is found in the endoplasmic reticulum membrane. The protein localises to the cytoplasmic vesicle. The protein resides in the autophagosome membrane. Functionally, accessory subunit of the vacuolar transporter chaperone (VTC) complex. The VTC complex acts as a vacuolar polyphosphate polymerase that catalyzes the synthesis of inorganic polyphosphate (polyP) via transfer of phosphate from ATP to a growing polyP chain, releasing ADP. VTC exposes its catalytic domain VTC4 to the cytosol, where the growing polyP chain winds through a tunnel-shaped pocket, integrating cytoplasmic polymer synthesis with polyP membrane translocation. The VTC complex carries 9 vacuolar transmembrane domains, which are likely to constitute the translocation channel into the organelle lumen. PolyP synthesis is tightly coupled to its transport into the vacuole lumen, in order to avoid otherwise toxic intermediates in the cytosol, and it depends on the proton gradient across the membrane, formed by V-ATPase. Binds inositol hexakisphosphate (Ins6P) and similar inositol polyphosphates, such as 5-diphospho-inositol pentakisphosphate (5-InsP7); these are important intracellular signaling molecules. Inositol polyphosphate binding promotes vacuolar polyphosphate synthesis. The VTC complex also plays a role in vacuolar membrane fusion. Required for SEC18/NSF activity in SNARE priming, membrane binding of LMA1 and V(0) trans-complex formation. In Saccharomyces cerevisiae (strain ATCC 204508 / S288c) (Baker's yeast), this protein is Vacuolar transporter chaperone complex subunit 2.